A 168-amino-acid polypeptide reads, in one-letter code: Large ribosomal subunit protein bL17 (168 aa).

Residues 124–168 are disordered; the sequence is QATGEAEAATKRAAKDAEGSAEVSEAKVDTTKADDEAAAEESKDA. Over residues 131–168 the composition is skewed to basic and acidic residues; the sequence is AATKRAAKDAEGSAEVSEAKVDTTKADDEAAAEESKDA.

Belongs to the bacterial ribosomal protein bL17 family. As to quaternary structure, part of the 50S ribosomal subunit. Contacts protein L32.

In Streptomyces coelicolor (strain ATCC BAA-471 / A3(2) / M145), this protein is Large ribosomal subunit protein bL17.